A 194-amino-acid polypeptide reads, in one-letter code: Large ribosomal subunit protein bL9 (194 aa).

It belongs to the bacterial ribosomal protein bL9 family.

Its function is as follows. Binds to the 23S rRNA. This is Large ribosomal subunit protein bL9 from Paracoccus denitrificans (strain Pd 1222).